The following is a 476-amino-acid chain: Protein transport protein Sec61 subunit alpha (476 aa).

Over 2–33 (GIKFLEVIKPFCAVLPEIQKPERKIQFREKVL) the chain is Cytoplasmic. The helical transmembrane segment at 34-53 (WTAITLFIFLVCCQIPLFGI) threads the bilayer. At 54–76 (MSSDSADPFYWMRVILASNRGTL) the chain is on the lumenal side. The chain crosses the membrane as a helical span at residues 77–96 (MELGISPIVTSGLIMQLLAG). Residues 97–117 (AKIIGVGDTPKDRALFNGAQK) lie on the Cytoplasmic side of the membrane. The chain crosses the membrane as a helical span at residues 118-138 (LFGMIITIGQAIVYVMTGMYG). The Lumenal portion of the chain corresponds to 139 to 144 (DPSEMG). The helical transmembrane segment at 145–165 (AGICLLIIIQLFVAGLIVLLL) threads the bilayer. Residues 166–172 (DELLQKG) are Cytoplasmic-facing. The helical transmembrane segment at 173–193 (YGLGSGISLFIATNICETIVW) threads the bilayer. At 194 to 240 (KAFSPTTVNTGRGTEFEGAIIALFHLLATRTDKVRALREGFYRQNLP) the chain is on the lumenal side. The chain crosses the membrane as a helical span at residues 241–261 (NLMNLIATVFVFAVVIYFQGF). The Cytoplasmic segment spans residues 262–288 (RVDLPIKSARYRGQYNTYPIKLFYTSN). Residues 289-309 (IPIILQSALVSNLYVISQMLS) traverse the membrane as a helical segment. At 310-354 (TRFSGNFLVNLLGTWSDATSGGPARAYPVAGLCYYLSPPESFGSV) the chain is on the lumenal side. Residues 355–375 (LDDPVHAGIYIVFMLGSCAFF) form a helical membrane-spanning segment. Topologically, residues 376–420 (SKTWIEVSGSSAKDVAKQLKEQQMVMRGHRETSMVHELNRYIPTA) are cytoplasmic. The chain crosses the membrane as a helical span at residues 421–441 (AAFGGLCIGGLSVMADFLGAI). The Lumenal portion of the chain corresponds to 442–445 (GSGT). Residues 446 to 462 (GILLAVTIIYQYFEIFV) traverse the membrane as a helical segment. At 463–476 (KEQSEVGSMGALLF) the chain is on the cytoplasmic side.

It belongs to the SecY/SEC61-alpha family. The SEC61 channel-forming translocon complex consists of channel-forming core components SEC61A1, SEC61B and SEC61G and different auxiliary components such as SEC62 and SEC63. The SEC61 channel associates with the multi-pass translocon (MPT) complex.

Its subcellular location is the endoplasmic reticulum membrane. Functionally, component of SEC61 channel-forming translocon complex that mediates transport of signal peptide-containing precursor polypeptides across the endoplasmic reticulum (ER). Forms a ribosome receptor and a gated pore in the ER membrane, both functions required for cotranslational translocation of nascent polypeptides. May cooperate with auxiliary protein SEC62, SEC63 and HSPA5/BiP to enable post-translational transport of small presecretory proteins. The SEC61 channel is also involved in ER membrane insertion of transmembrane proteins: it mediates membrane insertion of the first few transmembrane segments of proteins, while insertion of subsequent transmembrane regions of multi-pass membrane proteins is mediated by the multi-pass translocon (MPT) complex. The protein is Protein transport protein Sec61 subunit alpha (sec61a) of Hemitripterus americanus (Sea raven).